The primary structure comprises 717 residues: MEDEPKLPTDDGPTFNESCKISSEILTAGDRKLLKVELLKEETTLVSWKKLMDEASKENGGLFVSAPERLLNANPNLEFRLAPGAQTENEMVNQPHPNRLNSVIAKIERLYMGKDGSDGEELDGAPDDDDYDTEDSFIDDAELDEYFEVDNSPIKHDGFFVNRGKLERIEPSATSNQQQPKKRRRKESAKPCGDVVDVSRKRAKMAKTAGGKDQSASPGPSSKKISNDSKTVQDSFSPLKAQNGNDSLVLENVKHTDKANHQPMNATSPKSKAAGSSGPLHPKCSSKSVHEQSNSPPGKSRPNVSAKSAVVRQQVNNGMPDLDIATESKTSIQISKKSGSNGRPKYSTLEKAIRNLEKLVAESRPPAATENQDADISSQAVKRGLPGDVKLHLAKVARIAYASQGEISGELINRLMGIVGHLIQIRSLKRNLKIMIDSIVTANREKDTRFQRIKSEITEMLKTQVPLVESQETNQEAGTSDDFQDVGSLGKSPVKKFVMDVALEEKLCDLYDVFVEGMDEHSGSQIRKLYSDLAQLWPNSLVDNHEIRRAICREKERRRALEGNIGKEMDQTKITKKKQTQLVPKSEGITYPDKTSGVEVKASVVLTATTTSLVDCQPAADSSFERSKQQHEKLKRTSSLSNPAAEGKKVRRKTEPALEETHLPAEKPLVLALKRQTHLKSKTHKQVQVHPQSKAHKQAQVHPKAKTQTPPDLNLPS.

Disordered stretches follow at residues 114–136, 166–308, and 620–717; these read KDGS…TEDS, LERI…SAKS, and ADSS…NLPS. The span at 118 to 136 shows a compositional bias: acidic residues; it reads DGEELDGAPDDDDYDTEDS. Polar residues-rich tracts occupy residues 214 to 246 and 285 to 308; these read QSAS…NGND and SSKS…SAKS. The span at 623–632 shows a compositional bias: basic and acidic residues; sequence SFERSKQQHE. A Nuclear localization signal motif is present at residues 634-641; the sequence is LKRTSSLS. A compositionally biased stretch (basic and acidic residues) spans 653–665; that stretch reads KTEPALEETHLPA. Basic residues predominate over residues 675–705; it reads RQTHLKSKTHKQVQVHPQSKAHKQAQVHPKA. The span at 706–717 shows a compositional bias: polar residues; it reads KTQTPPDLNLPS.

Belongs to the ubinuclein family. Component of the HIRA complex made of UBN1, UBN2, ASF1A, CABIN1 and HIRA. Interacts with HIRA.

The protein resides in the nucleus. Its subcellular location is the nucleolus. May be required for replication-independent chromatin assembly. The protein is Ubinuclein-2 of Arabidopsis thaliana (Mouse-ear cress).